Here is a 92-residue protein sequence, read N- to C-terminus: MVRSLKKGPFVANDLFKKIEKLNNKGKKKVLVTWSRSSTIVPVMIGHTIAVHNGREHIPVFITDKMVGHKLGEFSLTRTYRGHAKTDKKSKR.

This sequence belongs to the universal ribosomal protein uS19 family.

The protein localises to the plastid. It is found in the chloroplast. In terms of biological role, protein S19 forms a complex with S13 that binds strongly to the 16S ribosomal RNA. The chain is Small ribosomal subunit protein uS19c from Oedogonium cardiacum (Filamentous green alga).